A 294-amino-acid chain; its full sequence is Elongation factor Ts (294 aa).

An involved in Mg(2+) ion dislocation from EF-Tu region spans residues 82 to 85; that stretch reads TDFV.

The protein belongs to the EF-Ts family.

The protein resides in the cytoplasm. Associates with the EF-Tu.GDP complex and induces the exchange of GDP to GTP. It remains bound to the aminoacyl-tRNA.EF-Tu.GTP complex up to the GTP hydrolysis stage on the ribosome. This is Elongation factor Ts from Nitrosomonas eutropha (strain DSM 101675 / C91 / Nm57).